Reading from the N-terminus, the 338-residue chain is UDP-glucose 4-epimerase (338 aa).

NAD(+)-binding positions include 11–12 (FI), 31–36 (DNLCNS), 58–59 (DI), 80–84 (FAGLK), asparagine 99, serine 124, tyrosine 149, lysine 153, and phenylalanine 178. Substrate-binding residues include serine 124 and tyrosine 149. Catalysis depends on tyrosine 149, which acts as the Proton acceptor. Residues asparagine 179, 199 to 200 (NL), 216 to 218 (SVF), arginine 231, and 292 to 295 (RAGD) each bind substrate.

It belongs to the NAD(P)-dependent epimerase/dehydratase family. As to quaternary structure, homodimer. The cofactor is NAD(+).

The catalysed reaction is UDP-alpha-D-glucose = UDP-alpha-D-galactose. The protein operates within carbohydrate metabolism; galactose metabolism. Its function is as follows. Involved in the metabolism of galactose. Plays an essential role in the incorporation of galactose into meningococcal lipopolysaccharide surface molecules, which are important for pathogenesis. Catalyzes the conversion of UDP-galactose (UDP-Gal) to UDP-glucose (UDP-Glc) through a mechanism involving the transient reduction of NAD. This Neisseria gonorrhoeae protein is UDP-glucose 4-epimerase (galE).